The following is a 222-amino-acid chain: Pectate lyase A (222 aa).

The signal sequence occupies residues 1 to 26 (MKKMLTLLLSAGLVASIFGVMPAAAA).

The protein belongs to the polysaccharide lyase 3 family. The cofactor is Ca(2+).

The protein localises to the secreted. The catalysed reaction is Eliminative cleavage of (1-&gt;4)-alpha-D-galacturonan to give oligosaccharides with 4-deoxy-alpha-D-galact-4-enuronosyl groups at their non-reducing ends.. It catalyses the reaction Eliminative cleavage of (1-&gt;4)-alpha-D-galacturonan methyl ester to give oligosaccharides with 4-deoxy-6-O-methyl-alpha-D-galact-4-enuronosyl groups at their non-reducing ends.. It functions in the pathway glycan metabolism; pectin degradation. In terms of biological role, catalyzes the depolymerization of both polygalacturonate and pectins with low (20-34%) and high (90%) levels of methyl esterification, with an endo mode of action. In contrast to the majority of pectate lyases, displays high activity on highly methylated pectins. Does not show xylanase and cellulase activity. The chain is Pectate lyase A from Paenibacillus amylolyticus.